Consider the following 557-residue polypeptide: uncharacterized protein (557 aa).

A DhaL domain is found at Ser7–Ser206.

This is an uncharacterized protein from Mycoplasma genitalium (strain ATCC 33530 / DSM 19775 / NCTC 10195 / G37) (Mycoplasmoides genitalium).